The chain runs to 580 residues: 2-succinyl-5-enolpyruvyl-6-hydroxy-3-cyclohexene-1-carboxylate synthase (580 aa).

The segment at 178-199 (LEPTPMPGDLTEPPAAAQPRDD) is disordered.

It belongs to the TPP enzyme family. MenD subfamily. Homodimer. Mg(2+) serves as cofactor. Mn(2+) is required as a cofactor. The cofactor is thiamine diphosphate.

It catalyses the reaction isochorismate + 2-oxoglutarate + H(+) = 5-enolpyruvoyl-6-hydroxy-2-succinyl-cyclohex-3-ene-1-carboxylate + CO2. It participates in quinol/quinone metabolism; 1,4-dihydroxy-2-naphthoate biosynthesis; 1,4-dihydroxy-2-naphthoate from chorismate: step 2/7. It functions in the pathway quinol/quinone metabolism; menaquinone biosynthesis. In terms of biological role, catalyzes the thiamine diphosphate-dependent decarboxylation of 2-oxoglutarate and the subsequent addition of the resulting succinic semialdehyde-thiamine pyrophosphate anion to isochorismate to yield 2-succinyl-5-enolpyruvyl-6-hydroxy-3-cyclohexene-1-carboxylate (SEPHCHC). This is 2-succinyl-5-enolpyruvyl-6-hydroxy-3-cyclohexene-1-carboxylate synthase from Roseiflexus castenholzii (strain DSM 13941 / HLO8).